The following is a 485-amino-acid chain: Aspartyl/glutamyl-tRNA(Asn/Gln) amidotransferase subunit B (485 aa).

The protein belongs to the GatB/GatE family. GatB subfamily. Heterotrimer of A, B and C subunits.

It carries out the reaction L-glutamyl-tRNA(Gln) + L-glutamine + ATP + H2O = L-glutaminyl-tRNA(Gln) + L-glutamate + ADP + phosphate + H(+). The enzyme catalyses L-aspartyl-tRNA(Asn) + L-glutamine + ATP + H2O = L-asparaginyl-tRNA(Asn) + L-glutamate + ADP + phosphate + 2 H(+). Its function is as follows. Allows the formation of correctly charged Asn-tRNA(Asn) or Gln-tRNA(Gln) through the transamidation of misacylated Asp-tRNA(Asn) or Glu-tRNA(Gln) in organisms which lack either or both of asparaginyl-tRNA or glutaminyl-tRNA synthetases. The reaction takes place in the presence of glutamine and ATP through an activated phospho-Asp-tRNA(Asn) or phospho-Glu-tRNA(Gln). This Anaplasma marginale (strain Florida) protein is Aspartyl/glutamyl-tRNA(Asn/Gln) amidotransferase subunit B.